Consider the following 391-residue polypeptide: Processive diacylglycerol beta-glucosyltransferase (391 aa).

Belongs to the glycosyltransferase 28 family. UgtP subfamily.

The protein localises to the cell membrane. It carries out the reaction a 1,2-diacyl-3-O-(beta-D-glucopyranosyl)-sn-glycerol + UDP-alpha-D-glucose = a 1,2-diacyl-3-O-(beta-D-Glc-(1-&gt;6)-beta-D-Glc)-sn-glycerol + UDP + H(+). The enzyme catalyses a 1,2-diacyl-sn-glycerol + UDP-alpha-D-glucose = a 1,2-diacyl-3-O-(beta-D-glucopyranosyl)-sn-glycerol + UDP + H(+). It participates in glycolipid metabolism; diglucosyl-diacylglycerol biosynthesis. Functionally, processive glucosyltransferase involved in the biosynthesis of both the bilayer- and non-bilayer-forming membrane glucolipids. Is able to successively transfer two glucosyl residues to diacylglycerol (DAG), thereby catalyzing the formation of beta-monoglucosyl-DAG (3-O-(beta-D-glucopyranosyl)-1,2-diacyl-sn-glycerol) and beta-diglucosyl-DAG (3-O-(beta-D-glucopyranosyl-beta-(1-&gt;6)-D-glucopyranosyl)-1,2-diacyl-sn-glycerol). Beta-diglucosyl-DAG is the predominant glycolipid found in Bacillales and is also used as a membrane anchor for lipoteichoic acid (LTA). This is Processive diacylglycerol beta-glucosyltransferase from Staphylococcus epidermidis (strain ATCC 12228 / FDA PCI 1200).